Reading from the N-terminus, the 206-residue chain is Superoxide dismutase [Mn] (206 aa).

Residues His27, His82, Asp168, and His172 each coordinate Mn(2+).

It belongs to the iron/manganese superoxide dismutase family. In terms of assembly, homodimer. Requires Mn(2+) as cofactor.

It carries out the reaction 2 superoxide + 2 H(+) = H2O2 + O2. In terms of biological role, destroys superoxide anion radicals which are normally produced within the cells and which are toxic to biological systems. The protein is Superoxide dismutase [Mn] (sodA) of Salmonella typhimurium (strain LT2 / SGSC1412 / ATCC 700720).